The following is a 427-amino-acid chain: Enolase (427 aa).

Glutamine 163 lines the (2R)-2-phosphoglycerate pocket. Glutamate 205 functions as the Proton donor in the catalytic mechanism. Residues aspartate 242, glutamate 285, and aspartate 312 each contribute to the Mg(2+) site. Residues lysine 337, arginine 366, serine 367, and lysine 388 each coordinate (2R)-2-phosphoglycerate. Lysine 337 serves as the catalytic Proton acceptor.

This sequence belongs to the enolase family. Mg(2+) serves as cofactor.

It is found in the cytoplasm. The protein resides in the secreted. It localises to the cell surface. The catalysed reaction is (2R)-2-phosphoglycerate = phosphoenolpyruvate + H2O. Its pathway is carbohydrate degradation; glycolysis; pyruvate from D-glyceraldehyde 3-phosphate: step 4/5. In terms of biological role, catalyzes the reversible conversion of 2-phosphoglycerate (2-PG) into phosphoenolpyruvate (PEP). It is essential for the degradation of carbohydrates via glycolysis. This chain is Enolase, found in Ralstonia nicotianae (strain ATCC BAA-1114 / GMI1000) (Ralstonia solanacearum).